The following is a 582-amino-acid chain: Hemagglutinin-neuraminidase (582 aa).

The Intravirion portion of the chain corresponds to 1-34 (MEPSKLFIMSDNATVAPGPVVNAAGKKTFRTCFR). Residues 35-55 (ILVLSVQAVTLILVIVTLGEL) form a helical; Signal-anchor for type II membrane protein membrane-spanning segment. At 56 to 582 (IRMINDQGLS…LPVLARLTIT (527 aa)) the chain is on the virion surface side. 3 disulfides stabilise this stretch: Cys-178-Cys-202, Cys-192-Cys-253, and Cys-244-Cys-257. An involved in neuraminidase activity region spans residues 240–245 (NRKSCS). N-linked (GlcNAc...) asparagine; by host glycans are attached at residues Asn-284 and Asn-329. 3 disulfide bridges follow: Cys-350–Cys-471, Cys-382–Cys-392, and Cys-465–Cys-475. Residues Asn-400 and Asn-448 are each glycosylated (N-linked (GlcNAc...) asparagine; by host). N-linked (GlcNAc...) asparagine; by host glycosylation occurs at Asn-507. Cys-545 and Cys-556 are joined by a disulfide.

This sequence belongs to the paramyxoviruses hemagglutinin-neuraminidase family. In terms of assembly, homotetramer; composed of disulfide-linked homodimers. Interacts with F protein trimer.

Its subcellular location is the virion membrane. It localises to the host cell membrane. The enzyme catalyses Hydrolysis of alpha-(2-&gt;3)-, alpha-(2-&gt;6)-, alpha-(2-&gt;8)- glycosidic linkages of terminal sialic acid residues in oligosaccharides, glycoproteins, glycolipids, colominic acid and synthetic substrates.. Its function is as follows. Attaches the virus to alpha-2,3-linked sialic acid-containing cell receptors and thereby initiating infection. Binding of HN protein to the receptor induces a conformational change that allows the F protein to trigger virion/cell membranes fusion. Binds to the glycan motifs sialyl Lewis (SLe) and GM2 ganglioside (GM2-glycan). Neuraminidase activity ensures the efficient spread of the virus by dissociating the mature virions from the neuraminic acid containing glycoproteins. This is Hemagglutinin-neuraminidase (HN) from Homo sapiens (Human).